Here is a 150-residue protein sequence, read N- to C-terminus: Large ribosomal subunit protein uL16 (150 aa).

Belongs to the universal ribosomal protein uL16 family. In terms of assembly, component of the small ribosomal subunit. Mature ribosomes consist of a small (40S) and a large (60S) subunit. The 40S subunit contains about 33 different proteins and 1 molecule of RNA (18S). The 60S subunit contains about 49 different proteins and 3 molecules of RNA (25S, 5.8S and 5S).

This chain is Large ribosomal subunit protein uL16 (RPL10), found in Nicotiana tabacum (Common tobacco).